The following is a 496-amino-acid chain: MTKDGDEGSKSGVSRRKFLGSAAVGVATAGIASQLLTLSAPAEAAVKTNVGPSRAGVGYDVIVIGGGFAGVTAAREASRSGLKTLILEGRSRLGGRTFTSKLQNQKVELGGTWVHWTQPNVWTEIMHYGLEVEETVGLANPETVIWVTEDNVKRAPAAEAFEIFGSACNEYYKEARNIYPRPFEPFFERKKLQHVDGLSAADYLEKLPLTREQKDMMDSWLSGNGHNYPETIAYSEIMRWFALSNFNMPTMFDSIARYKIKTGTHSLLEAIMADGNSEVKLSTPVTKVNQDKDKVTVTTEDGVFTASAVIVAVPINTLHDIEYSPKLSAAKVDMGSQRHAGAGVKGYIRVKQNVGNVMTYAPARNKLTPFTSVFTDHVDESGTLLIAFSADPKLIDINDIKAVEKALQPLLPGVEVTASYGYDWNLDPFSKGTWCTYRPNQTTRYLTELQKREGRLFFAGSDMANGWRGFIDGAIENGREVGHQVATYLKRENDNA.

A signal peptide (tat-type signal) is located at residues 1–42; sequence MTKDGDEGSKSGVSRRKFLGSAAVGVATAGIASQLLTLSAPA. 7 residues coordinate FAD: alanine 69, glutamate 88, arginine 96, tryptophan 113, valine 285, serine 461, and isoleucine 471.

The protein belongs to the flavin monoamine oxidase family. As to quaternary structure, homodimer. The cofactor is FAD. Post-translationally, predicted to be exported by the Tat system. The position of the signal peptide cleavage has not been experimentally proven.

The protein resides in the periplasm. The catalysed reaction is pseudooxynicotine + 2 Fe(III)-[cytochrome c] + H2O = 4-oxo-4-(pyridin-3-yl)butanal + methylamine + 2 Fe(II)-[cytochrome c] + 2 H(+). It functions in the pathway alkaloid degradation; nicotine degradation. Strongly inhibited by Na(2)MoO(4) and FeCl(3). Activity is nearly twice as high in the presence of Na(2)WO(4). Involved in nicotine degradation. Catalyzes the deamination of pseudooxynicotine to 3-succinoylsemialdehyde-pyridine. Functions as a dehydrogenase that uses the c-type cytochrome protein CycN as the physiological electron acceptor. O(2) is a poor electron acceptor. Pnao is oxidized by CycN 230 times faster than O(2) at equivalent oxidant concentrations. The protein is Pseudooxynicotine dehydrogenase of Pseudomonas putida (strain DSM 28022 / S16).